We begin with the raw amino-acid sequence, 523 residues long: Ubiquitin carboxyl-terminal hydrolase 22-B (523 aa).

A UBP-type zinc finger spans residues 4 to 121; that stretch reads AGCSHVNSFK…KEEQRKAWKL (118 aa). 12 residues coordinate Zn(2+): cysteine 6, histidine 8, cysteine 46, cysteine 49, cysteine 59, cysteine 62, cysteine 67, histidine 72, histidine 76, histidine 82, cysteine 95, and cysteine 98. The 345-residue stretch at 174 to 518 folds into the USP domain; sequence RGLINLGNTC…EGYLLFYHKQ (345 aa). Catalysis depends on cysteine 183, which acts as the Nucleophile. The Proton acceptor role is filled by histidine 477.

This sequence belongs to the peptidase C19 family. UBP8 subfamily. Component of some SAGA transcription coactivator-HAT complexes.

Its subcellular location is the nucleus. The catalysed reaction is Thiol-dependent hydrolysis of ester, thioester, amide, peptide and isopeptide bonds formed by the C-terminal Gly of ubiquitin (a 76-residue protein attached to proteins as an intracellular targeting signal).. Histone deubiquitinating component of the transcription regulatory histone acetylation (HAT) complex SAGA. Catalyzes the deubiquitination of both histones H2A and H2B, thereby acting as a coactivator. Recruited to specific gene promoters by activators, where it is required for transcription. This is Ubiquitin carboxyl-terminal hydrolase 22-B (usp22-b) from Xenopus laevis (African clawed frog).